A 336-amino-acid chain; its full sequence is Holliday junction branch migration complex subunit RuvB (336 aa).

The interval 4–184 (ADRLIQPQVQ…FGIPLRLEFY (181 aa)) is large ATPase domain (RuvB-L). Residues Arg24, Gly65, Lys68, Thr69, Thr70, 131–133 (EDY), Arg174, Tyr184, and Arg221 contribute to the ATP site. Thr69 lines the Mg(2+) pocket. Residues 185–255 (NVADLTTIVT…VAEYALDLLD (71 aa)) are small ATPAse domain (RuvB-S). A head domain (RuvB-H) region spans residues 258 to 336 (DQGFDYLDRK…HFSLVRPEKA (79 aa)). DNA is bound by residues Arg294, Arg313, and Arg318.

The protein belongs to the RuvB family. As to quaternary structure, homohexamer. Forms an RuvA(8)-RuvB(12)-Holliday junction (HJ) complex. HJ DNA is sandwiched between 2 RuvA tetramers; dsDNA enters through RuvA and exits via RuvB. An RuvB hexamer assembles on each DNA strand where it exits the tetramer. Each RuvB hexamer is contacted by two RuvA subunits (via domain III) on 2 adjacent RuvB subunits; this complex drives branch migration. In the full resolvosome a probable DNA-RuvA(4)-RuvB(12)-RuvC(2) complex forms which resolves the HJ.

The protein localises to the cytoplasm. It catalyses the reaction ATP + H2O = ADP + phosphate + H(+). In terms of biological role, the RuvA-RuvB-RuvC complex processes Holliday junction (HJ) DNA during genetic recombination and DNA repair, while the RuvA-RuvB complex plays an important role in the rescue of blocked DNA replication forks via replication fork reversal (RFR). RuvA specifically binds to HJ cruciform DNA, conferring on it an open structure. The RuvB hexamer acts as an ATP-dependent pump, pulling dsDNA into and through the RuvAB complex. RuvB forms 2 homohexamers on either side of HJ DNA bound by 1 or 2 RuvA tetramers; 4 subunits per hexamer contact DNA at a time. Coordinated motions by a converter formed by DNA-disengaged RuvB subunits stimulates ATP hydrolysis and nucleotide exchange. Immobilization of the converter enables RuvB to convert the ATP-contained energy into a lever motion, pulling 2 nucleotides of DNA out of the RuvA tetramer per ATP hydrolyzed, thus driving DNA branch migration. The RuvB motors rotate together with the DNA substrate, which together with the progressing nucleotide cycle form the mechanistic basis for DNA recombination by continuous HJ branch migration. Branch migration allows RuvC to scan DNA until it finds its consensus sequence, where it cleaves and resolves cruciform DNA. This chain is Holliday junction branch migration complex subunit RuvB, found in Shewanella frigidimarina (strain NCIMB 400).